Here is a 140-residue protein sequence, read N- to C-terminus: Mialostatin (140 aa).

An N-terminal signal peptide occupies residues 1–18; sequence MAFFKSAVFLVCVVLAAA. 2 cysteine pairs are disulfide-bonded: C90–C103 and C114–C134.

This sequence belongs to the cystatin family. In terms of tissue distribution, expressed in midgut (at protein level).

The protein resides in the secreted. Functionally, inhibitor of cysteine proteinases. Inhibits several endogenous midgut digestive cysteine proteases, such as cathepsin L1, L3, B and C, but not aspartic protease cathepsin D1 and cysteine protease legumain. Inhibits proteolysis of blood proteins catalyzed by tick gut cysteine cathepsins. Inhibits host cathepsin B (CSTB), C (CTSC), H (CTSH), K (CTSK), L (CTSL) and S (CTSS). This chain is Mialostatin, found in Ixodes ricinus (Common tick).